We begin with the raw amino-acid sequence, 293 residues long: Shikimate kinase (293 aa).

87–97 contributes to the ATP binding site; sequence PLAGGLKSSSA.

This sequence belongs to the GHMP kinase family. Archaeal shikimate kinase subfamily.

It is found in the cytoplasm. It carries out the reaction shikimate + ATP = 3-phosphoshikimate + ADP + H(+). It participates in metabolic intermediate biosynthesis; chorismate biosynthesis; chorismate from D-erythrose 4-phosphate and phosphoenolpyruvate: step 5/7. This is Shikimate kinase from Methanosarcina mazei (strain ATCC BAA-159 / DSM 3647 / Goe1 / Go1 / JCM 11833 / OCM 88) (Methanosarcina frisia).